Here is a 207-residue protein sequence, read N- to C-terminus: Phosphoserine phosphatase (207 aa).

Residue Asp8 is the Nucleophile of the active site. The Mg(2+) site is built by Asp8 and Asp10. The active-site Proton donor is the Asp10. Substrate-binding positions include Glu17, Arg53, 96–97 (SG), and Lys141. Asp164 contacts Mg(2+). Asn167 serves as a coordination point for substrate.

This sequence belongs to the HAD-like hydrolase superfamily. SerB family. Requires Mg(2+) as cofactor.

It catalyses the reaction O-phospho-L-serine + H2O = L-serine + phosphate. It carries out the reaction O-phospho-D-serine + H2O = D-serine + phosphate. It participates in amino-acid biosynthesis; L-serine biosynthesis; L-serine from 3-phospho-D-glycerate: step 3/3. In Campylobacter jejuni subsp. doylei (strain ATCC BAA-1458 / RM4099 / 269.97), this protein is Phosphoserine phosphatase.